The chain runs to 235 residues: Transcription factor hepR (235 aa).

Positions 14–45 are disordered; that stretch reads QNSPESSRDVLSMASPGLLPIDPSPEHDETNK. The C2H2-type zinc-finger motif lies at 175–205; sequence IQCPCLDERGERCSRMFSRLDNMRDHVRRIH.

It localises to the nucleus. Transcription factor; part of the gene cluster that mediates the biosynthesis of heptelidic acid (HA), a sesquiterpene lactone that acts as an inhibitor of glyceraldehyde-3-phosphatedehydrogenase (GAPDH) and a growth inhibitor of the salt-tolerant lactic acid bacteria in soy sauce brewing. Both hepR and hepS regulate the transcription of the heptelidic acid cluster, but they are not involved in mutual transcriptional regulation and act with different mechanisms. In Aspergillus oryzae (strain ATCC 42149 / RIB 40) (Yellow koji mold), this protein is Transcription factor hepR.